The chain runs to 567 residues: Glutamine--tRNA ligase (567 aa).

The 'HIGH' region signature appears at 47–57 (PEPNGYLHIGH). Residues 48–50 (EPN) and 54–60 (HIGHAKS) each bind ATP. 2 residues coordinate L-glutamine: aspartate 80 and tyrosine 225. ATP-binding positions include threonine 244 and 274–275 (RL). The 'KMSKS' region signature appears at 281–285 (ITSKR).

This sequence belongs to the class-I aminoacyl-tRNA synthetase family. As to quaternary structure, monomer.

The protein resides in the cytoplasm. The catalysed reaction is tRNA(Gln) + L-glutamine + ATP = L-glutaminyl-tRNA(Gln) + AMP + diphosphate. The sequence is that of Glutamine--tRNA ligase from Pseudomonas putida (strain ATCC 47054 / DSM 6125 / CFBP 8728 / NCIMB 11950 / KT2440).